We begin with the raw amino-acid sequence, 305 residues long: Probable lipid kinase YegS-like (305 aa).

In terms of domain architecture, DAGKc spans 1–129 (MSERKALLIL…IDLGEVGGQI (129 aa)). ATP is bound by residues threonine 39, 65 to 71 (GDGTLRD), and threonine 92. Residues leucine 210, aspartate 213, and leucine 215 each contribute to the Mg(2+) site. Residue glutamate 268 is the Proton acceptor of the active site.

Belongs to the diacylglycerol/lipid kinase family. YegS lipid kinase subfamily. Mg(2+) is required as a cofactor. It depends on Ca(2+) as a cofactor.

It is found in the cytoplasm. Functionally, probably phosphorylates lipids; the in vivo substrate is unknown. This is Probable lipid kinase YegS-like from Pseudomonas fluorescens (strain Pf0-1).